Here is a 471-residue protein sequence, read N- to C-terminus: Galactolipase DONGLE, chloroplastic (471 aa).

The N-terminal 88 residues, 1–88 (MAAKVFTQNP…PLSRVWREIQ (88 aa)), are a transit peptide targeting the chloroplast. A disordered region spans residues 44 to 71 (SSSTMSPPISSSPLSLPSSSSSQAIPPS). A GXSXG motif is present at residues 284 to 288 (GHSMG). Catalysis depends on Ser-286, which acts as the Acyl-ester intermediate. Residues Asp-349 and His-400 each act as charge relay system in the active site.

It belongs to the AB hydrolase superfamily. Lipase family. Expressed in leaves and seedlings. Not detected in flowers, siliques or roots.

It is found in the plastid. It localises to the chloroplast. The catalysed reaction is a 1,2-diacyl-3-O-(beta-D-galactosyl)-sn-glycerol + 2 H2O = 3-beta-D-galactosyl-sn-glycerol + 2 a fatty acid + 2 H(+). It catalyses the reaction a 1,2-diacyl-sn-glycero-3-phosphocholine + H2O = a 2-acyl-sn-glycero-3-phosphocholine + a fatty acid + H(+). The enzyme catalyses a 1,2-diacyl-3-O-[alpha-D-galactosyl-(1-&gt;6)-beta-D-galactosyl]-sn-glycerol + H2O = acyl-3-O-[alpha-D-galactosyl-(1-&gt;6)-beta-D-galactosyl]-sn-glycerol + a fatty acid + H(+). Its function is as follows. Sn-1-specific phospholipase that releases free fatty acids from phosphatidylcholine. Has a higher galactolipase activity than phospholipase A1 activity when digalactosyldiacylglycerol (DGDG) is used as substrate. Catalyzes the initial step of jasmonic acid biosynthesis. Required for the biosynthesis of basal-level endogenous jasmonate in vegetative tissues. Regulates leaves growth. Not essential for jasmonate biosynthesis after wounding or upon pathogen infection. The sequence is that of Galactolipase DONGLE, chloroplastic from Arabidopsis thaliana (Mouse-ear cress).